Consider the following 100-residue polypeptide: Apolipoprotein C-II (100 aa).

The first 22 residues, 1-22 (MSSQFLLAFFLVLLVLGYEVQG), serve as a signal peptide directing secretion. The tract at residues 66–74 (SVDEKLRDM) is lipid binding. The interval 78–100 (SSAAMSTYAGIFTDQLFTLLKGE) is lipoprotein lipase cofactor.

It belongs to the apolipoprotein C2 family. In terms of processing, proapolipoprotein C-II is synthesized as a sialic acid containing glycoprotein which is subsequently desialylated prior to its proteolytic processing. Post-translationally, proapolipoprotein C-II, the major form found in plasma undergoes proteolytic cleavage of its N-terminal hexapeptide to generate the mature form apolipoprotein C-II, which occurs as the minor form in plasma.

Its subcellular location is the secreted. In terms of biological role, component of chylomicrons, very low-density lipoproteins (VLDL), low-density lipoproteins (LDL), and high-density lipoproteins (HDL) in plasma. Plays an important role in lipoprotein metabolism as an activator of lipoprotein lipase. The polypeptide is Apolipoprotein C-II (APOC2) (Cricetulus griseus (Chinese hamster)).